The following is a 446-amino-acid chain: Radical S-adenosyl methionine domain-containing protein 1, mitochondrial (446 aa).

Residues 15–277 (KGYNKLKDLP…VCEAEAMGFQ (263 aa)) enclose the Radical SAM core domain. 3 residues coordinate [4Fe-4S] cluster: Cys-34, Cys-38, and Cys-41. S-adenosyl-L-methionine contacts are provided by residues Gly-94, 95–96 (GT), Glu-130, Gln-159, Arg-171, and Asp-195.

It belongs to the anaerobic coproporphyrinogen-III oxidase family. HemW subfamily.

Its subcellular location is the mitochondrion. May be a heme chaperone, appears to bind heme. Homologous bacterial proteins do not have oxygen-independent coproporphyrinogen-III oxidase activity. Binds 1 [4Fe-4S] cluster. The cluster is coordinated with 3 cysteines and an exchangeable S-adenosyl-L-methionine. This Dictyostelium discoideum (Social amoeba) protein is Radical S-adenosyl methionine domain-containing protein 1, mitochondrial (rsad1).